Here is a 362-residue protein sequence, read N- to C-terminus: 3-isopropylmalate dehydrogenase (362 aa).

Position 78-91 (78-91) interacts with NAD(+); it reads GPKWETLPPDEQPE. Substrate contacts are provided by arginine 99, arginine 109, arginine 138, and aspartate 227. Residues aspartate 227, aspartate 251, and aspartate 255 each coordinate Mg(2+). Position 285-297 (285-297) interacts with NAD(+); sequence GSAPDIAGQGIAN.

It belongs to the isocitrate and isopropylmalate dehydrogenases family. LeuB type 1 subfamily. Homodimer. Requires Mg(2+) as cofactor. Mn(2+) serves as cofactor.

It is found in the cytoplasm. It catalyses the reaction (2R,3S)-3-isopropylmalate + NAD(+) = 4-methyl-2-oxopentanoate + CO2 + NADH. The protein operates within amino-acid biosynthesis; L-leucine biosynthesis; L-leucine from 3-methyl-2-oxobutanoate: step 3/4. Functionally, catalyzes the oxidation of 3-carboxy-2-hydroxy-4-methylpentanoate (3-isopropylmalate) to 3-carboxy-4-methyl-2-oxopentanoate. The product decarboxylates to 4-methyl-2 oxopentanoate. This chain is 3-isopropylmalate dehydrogenase, found in Geobacter metallireducens (strain ATCC 53774 / DSM 7210 / GS-15).